A 277-amino-acid chain; its full sequence is Putative phosphoenolpyruvate synthase regulatory protein (277 aa).

An ADP-binding site is contributed by 157-164; it reads GVSRCGKT.

This sequence belongs to the pyruvate, phosphate/water dikinase regulatory protein family. PSRP subfamily.

The catalysed reaction is [pyruvate, water dikinase] + ADP = [pyruvate, water dikinase]-phosphate + AMP + H(+). It catalyses the reaction [pyruvate, water dikinase]-phosphate + phosphate + H(+) = [pyruvate, water dikinase] + diphosphate. Functionally, bifunctional serine/threonine kinase and phosphorylase involved in the regulation of the phosphoenolpyruvate synthase (PEPS) by catalyzing its phosphorylation/dephosphorylation. The polypeptide is Putative phosphoenolpyruvate synthase regulatory protein (Erwinia tasmaniensis (strain DSM 17950 / CFBP 7177 / CIP 109463 / NCPPB 4357 / Et1/99)).